A 118-amino-acid chain; its full sequence is Large ribosomal subunit protein uL18 (118 aa).

The protein belongs to the universal ribosomal protein uL18 family. As to quaternary structure, part of the 50S ribosomal subunit; part of the 5S rRNA/L5/L18/L25 subcomplex. Contacts the 5S and 23S rRNAs.

In terms of biological role, this is one of the proteins that bind and probably mediate the attachment of the 5S RNA into the large ribosomal subunit, where it forms part of the central protuberance. This chain is Large ribosomal subunit protein uL18, found in Cupriavidus pinatubonensis (strain JMP 134 / LMG 1197) (Cupriavidus necator (strain JMP 134)).